The primary structure comprises 82 residues: Small ribosomal subunit protein uS17 (82 aa).

It belongs to the universal ribosomal protein uS17 family. As to quaternary structure, part of the 30S ribosomal subunit.

In terms of biological role, one of the primary rRNA binding proteins, it binds specifically to the 5'-end of 16S ribosomal RNA. This is Small ribosomal subunit protein uS17 from Aeromonas salmonicida (strain A449).